Reading from the N-terminus, the 205-residue chain is Ribonuclease HII (205 aa).

The 188-residue stretch at 14-201 folds into the RNase H type-2 domain; sequence EIIAGVDEAG…KGNINHSAIL (188 aa). A divalent metal cation is bound by residues D20, E21, and D111.

Belongs to the RNase HII family. The cofactor is Mn(2+). Requires Mg(2+) as cofactor.

Its subcellular location is the cytoplasm. The catalysed reaction is Endonucleolytic cleavage to 5'-phosphomonoester.. Its function is as follows. Endonuclease that specifically degrades the RNA of RNA-DNA hybrids. The chain is Ribonuclease HII from Orientia tsutsugamushi (strain Ikeda) (Rickettsia tsutsugamushi).